The chain runs to 110 residues: Hydrogenase maturation factor HypA (110 aa).

Ni(2+) is bound at residue H2. The Zn(2+) site is built by C73, C76, C87, and C89.

The protein belongs to the HypA/HybF family.

In terms of biological role, involved in the maturation of [NiFe] hydrogenases. Required for nickel insertion into the metal center of the hydrogenase. The sequence is that of Hydrogenase maturation factor HypA from Archaeoglobus fulgidus (strain ATCC 49558 / DSM 4304 / JCM 9628 / NBRC 100126 / VC-16).